The primary structure comprises 97 residues: MSNSRYSQTESNNDRKLEGLANKLATFRNINQEIGDRAVSDSSVINQMTDSLGSMFTDIKNSSSRLTRSLKAGNSIWRMVGLALLIFFILYTLFKLF.

The Cytoplasmic segment spans residues 1-74 (MSNSRYSQTE…RLTRSLKAGN (74 aa)). In terms of domain architecture, t-SNARE coiled-coil homology spans 7 to 69 (SQTESNNDRK…KNSSSRLTRS (63 aa)). The chain crosses the membrane as a helical; Anchor for type IV membrane protein span at residues 75-94 (SIWRMVGLALLIFFILYTLF). The Lumenal segment spans residues 95-97 (KLF).

As to quaternary structure, component of a SNARE complex consisting of SED5, GOS1, YKT6 and SFT1.

It localises to the golgi apparatus membrane. In terms of biological role, vesicle SNARE required for retrograde transport within the Golgi complex. This is Protein transport protein SFT1 (SFT1) from Saccharomyces cerevisiae (strain ATCC 204508 / S288c) (Baker's yeast).